The following is a 357-amino-acid chain: Alanine racemase (357 aa).

K33 (proton acceptor; specific for D-alanine) is an active-site residue. K33 is modified (N6-(pyridoxal phosphate)lysine). Residue R129 coordinates substrate. The active-site Proton acceptor; specific for L-alanine is the Y253. M301 contributes to the substrate binding site.

Belongs to the alanine racemase family. Pyridoxal 5'-phosphate is required as a cofactor.

The enzyme catalyses L-alanine = D-alanine. It functions in the pathway amino-acid biosynthesis; D-alanine biosynthesis; D-alanine from L-alanine: step 1/1. Catalyzes the interconversion of L-alanine and D-alanine. May also act on other amino acids. The chain is Alanine racemase (alr) from Pseudomonas savastanoi pv. phaseolicola (strain 1448A / Race 6) (Pseudomonas syringae pv. phaseolicola (strain 1448A / Race 6)).